Consider the following 203-residue polypeptide: Small ribosomal subunit protein uS4 (203 aa).

Positions 93–156 constitute an S4 RNA-binding domain; it reads TRLDNLVFRL…QNLAIVNEAI (64 aa).

It belongs to the universal ribosomal protein uS4 family. As to quaternary structure, part of the 30S ribosomal subunit. Contacts protein S5. The interaction surface between S4 and S5 is involved in control of translational fidelity.

Functionally, one of the primary rRNA binding proteins, it binds directly to 16S rRNA where it nucleates assembly of the body of the 30S subunit. Its function is as follows. With S5 and S12 plays an important role in translational accuracy. This is Small ribosomal subunit protein uS4 from Lacticaseibacillus casei (strain BL23) (Lactobacillus casei).